The sequence spans 499 residues: UTP--glucose-1-phosphate uridylyltransferase (499 aa).

N-acetylserine is present on S2. S17 carries the post-translational modification Phosphoserine. T19 carries the post-translational modification Phosphothreonine. A phosphoserine mark is found at S21 and S79. Residues 109–112 (LNGG), K123, Q186, and G215 contribute to the UTP site. 111 to 112 (GG) contributes to the substrate binding site. Residue K123 participates in Mg(2+) binding. Substrate contacts are provided by residues H216 and 244–246 (NGD). D246 contacts UTP. D246 provides a ligand contact to Mg(2+). R369 is modified (omega-N-methylarginine). K388 contacts UTP. The active site involves K388. Residues 448–499 (HLTITGNVFLGKDVTLRGTVIIVCSDGHKIDIPNGSILENVVVTGNLQILEH) form an oligomerization region.

This sequence belongs to the UDPGP type 1 family. As to quaternary structure, homooctamer.

It catalyses the reaction alpha-D-glucose 1-phosphate + UTP + H(+) = UDP-alpha-D-glucose + diphosphate. Its function is as follows. Plays a central role as a glucosyl donor in cellular metabolic pathways. This is UTP--glucose-1-phosphate uridylyltransferase from Saccharomyces cerevisiae (strain ATCC 204508 / S288c) (Baker's yeast).